The chain runs to 787 residues: Patatin-like phospholipase domain-containing protein OOU_Y34scaffold00095g16.3 (787 aa).

Disordered regions lie at residues 47 to 69 (APDT…ARSF) and 137 to 164 (KVVG…PGRR). A compositionally biased stretch (low complexity) spans 59-69 (ASPRSPSARSF). A compositionally biased stretch (basic residues) spans 144 to 157 (HRQKKSSRRRKRSK). A helical membrane pass occupies residues 180-200 (WPFLLIVGAWIVGLAVTYLFT). Residues 375–566 (LCLSGGASFA…RTDIPIRALN (192 aa)) enclose the PNPLA domain. The GXSXG signature appears at 406 to 410 (GTSGG). The active-site Nucleophile is the serine 408. Aspartate 553 (proton acceptor) is an active-site residue. Positions 745–787 (GTDEEITTNDEMEFASDEKAVLTEDEGQFDGVTDNTEGSPLLK) are disordered. A compositionally biased stretch (acidic residues) spans 746–759 (TDEEITTNDEMEFA). Residues 777 to 787 (TDNTEGSPLLK) are compositionally biased toward polar residues.

It belongs to the PLPL family.

Its subcellular location is the membrane. Its function is as follows. Probable lipid hydrolase. The polypeptide is Patatin-like phospholipase domain-containing protein OOU_Y34scaffold00095g16.3 (Pyricularia oryzae (strain Y34) (Rice blast fungus)).